The sequence spans 485 residues: Elongation factor TuB, chloroplastic (485 aa).

A chloroplast-targeting transit peptide spans 1 to 76 (MASISAASAT…TTHPRRFTVR (76 aa)). The region spanning 86 to 290 (KPHVNIGTIG…NVDEYIPIPQ (205 aa)) is the tr-type G domain. Residues 95–102 (GHVDHGKT) form a G1 region. A GTP-binding site is contributed by 95–102 (GHVDHGKT). The G2 stretch occupies residues 136–140 (GITIN). Positions 157–160 (DCPG) are G3. Residues 157 to 161 (DCPGH) and 212 to 215 (NKQD) each bind GTP. The tract at residues 212 to 215 (NKQD) is G4. Positions 250 to 252 (SAL) are G5.

This sequence belongs to the TRAFAC class translation factor GTPase superfamily. Classic translation factor GTPase family. EF-Tu/EF-1A subfamily.

The protein localises to the plastid. Its subcellular location is the chloroplast. This protein promotes the GTP-dependent binding of aminoacyl-tRNA to the A-site of ribosomes during protein biosynthesis. The chain is Elongation factor TuB, chloroplastic (TUFB) from Nicotiana sylvestris (Wood tobacco).